The sequence spans 237 residues: Ribose-5-phosphate isomerase A (237 aa).

Substrate contacts are provided by residues 30–33 (SGST), 87–90 (DGAD), and 100–103 (KGGG). The active-site Proton acceptor is Glu109. Residue Lys127 participates in substrate binding.

Belongs to the ribose 5-phosphate isomerase family. As to quaternary structure, homodimer.

It catalyses the reaction aldehydo-D-ribose 5-phosphate = D-ribulose 5-phosphate. Its pathway is carbohydrate degradation; pentose phosphate pathway; D-ribose 5-phosphate from D-ribulose 5-phosphate (non-oxidative stage): step 1/1. In terms of biological role, catalyzes the reversible conversion of ribose-5-phosphate to ribulose 5-phosphate. The sequence is that of Ribose-5-phosphate isomerase A from Synechococcus sp. (strain RCC307).